The following is a 431-amino-acid chain: UDP-N-acetylglucosamine 1-carboxyvinyltransferase (431 aa).

22–23 (KN) lines the phosphoenolpyruvate pocket. UDP-N-acetyl-alpha-D-glucosamine is bound at residue Arg92. Residue Asp116 is the Proton donor of the active site. Residues 121 to 125 (RPIDQ), Asp307, and Ile330 each bind UDP-N-acetyl-alpha-D-glucosamine.

This sequence belongs to the EPSP synthase family. MurA subfamily.

Its subcellular location is the cytoplasm. The enzyme catalyses phosphoenolpyruvate + UDP-N-acetyl-alpha-D-glucosamine = UDP-N-acetyl-3-O-(1-carboxyvinyl)-alpha-D-glucosamine + phosphate. Its pathway is cell wall biogenesis; peptidoglycan biosynthesis. Functionally, cell wall formation. Adds enolpyruvyl to UDP-N-acetylglucosamine. This Lactobacillus acidophilus (strain ATCC 700396 / NCK56 / N2 / NCFM) protein is UDP-N-acetylglucosamine 1-carboxyvinyltransferase.